The primary structure comprises 112 residues: MTILKTTILFVLAAVAEIGGAWLIWQAVREGKAWWWAGLGVVALGIYGFFAAFQPDAHFGRVLAAYGGVFIAGSLGWGMLMDGFRPDRWDVIGAAICIVGVGVIMFAPRPGG.

4 helical membrane passes run 8 to 28 (ILFV…WQAV), 33 to 53 (AWWW…FAAF), 62 to 82 (VLAA…MLMD), and 91 to 111 (VIGA…PRPG).

It belongs to the UPF0060 family.

It localises to the cell membrane. This chain is UPF0060 membrane protein AAur_4166, found in Paenarthrobacter aurescens (strain TC1).